The following is a 125-amino-acid chain: Holo-[acyl-carrier-protein] synthase (125 aa).

Mg(2+)-binding residues include Asp-8 and Glu-57.

It belongs to the P-Pant transferase superfamily. AcpS family. Requires Mg(2+) as cofactor.

Its subcellular location is the cytoplasm. The catalysed reaction is apo-[ACP] + CoA = holo-[ACP] + adenosine 3',5'-bisphosphate + H(+). Functionally, transfers the 4'-phosphopantetheine moiety from coenzyme A to a Ser of acyl-carrier-protein. This Solibacter usitatus (strain Ellin6076) protein is Holo-[acyl-carrier-protein] synthase.